Reading from the N-terminus, the 179-residue chain is Stathmin-2 (179 aa).

Positions 1–26 (MAKTAMAYKEKMKELSMLSLICSCFY) are membrane attachment. Ser-16 carries the phosphoserine modification. 2 S-palmitoyl cysteine lipidation sites follow: Cys-22 and Cys-24. An SLD domain is found at 38–179 (DDMEVKQINK…NKELQVELSG (142 aa)). The regulatory/phosphorylation domain stretch occupies residues 39-96 (DMEVKQINKRASGQAFELILKPPSPISEAPRTLASPKKKDLSLEEIQKKLEAAEERRK). A phosphoserine mark is found at Ser-50, Ser-62, Ser-73, and Ser-97. A coiled-coil region spans residues 75–179 (KKKDLSLEEI…NKELQVELSG (105 aa)).

Belongs to the stathmin family. As to quaternary structure, interacts with MAPK8. Interacts with ITM2C. Interacts with KIFBP. Interacts (via the N-terminal region) with CIB1 (via C-terminal region); the interaction is direct, occurs in a calcium-dependent manner and attenuates the neurite outgrowth inhibition of STMN2. In terms of processing, sumoylated. Post-translationally, phosphorylated mostly by MAPK8, but also by MAPK9 and MAPK10 in the developing brain cortex. N-terminal palmitoylation promotes specific anchoring to the cytosolic leaflet of Golgi membranes and subsequent vesicular trafficking along dendrites and axons. Neuronal Stathmins are substrates for palmitoyltransferases ZDHHC3, ZDHHC7 and ZDHHC15. In terms of tissue distribution, neuron specific.

It localises to the cytoplasm. The protein localises to the perinuclear region. The protein resides in the cell projection. Its subcellular location is the growth cone. It is found in the membrane. It localises to the axon. The protein localises to the golgi apparatus. The protein resides in the endosome. Its subcellular location is the lamellipodium. In terms of biological role, regulator of microtubule stability. When phosphorylated by MAPK8, stabilizes microtubules and consequently controls neurite length in cortical neurons. In the developing brain, negatively regulates the rate of exit from multipolar stage and retards radial migration from the ventricular zone. This chain is Stathmin-2 (STMN2), found in Homo sapiens (Human).